Reading from the N-terminus, the 327-residue chain is L-lactate dehydrogenase (327 aa).

Residues V18, D39, R44, Y69, and 83 to 84 (GL) each bind NAD(+). Residues Q86, R92, and 124–127 (NPVD) each bind substrate. NAD(+)-binding positions include 122–124 (AAN) and S147. Substrate is bound at residue 152–155 (DSAR). Beta-D-fructose 1,6-bisphosphate-binding residues include R157 and H172. H179 functions as the Proton acceptor in the catalytic mechanism. A Phosphotyrosine modification is found at Y224. T233 is a substrate binding site.

The protein belongs to the LDH/MDH superfamily. LDH family. As to quaternary structure, homotetramer.

The protein resides in the cytoplasm. It carries out the reaction (S)-lactate + NAD(+) = pyruvate + NADH + H(+). It functions in the pathway fermentation; pyruvate fermentation to lactate; (S)-lactate from pyruvate: step 1/1. Its activity is regulated as follows. Allosterically activated by fructose 1,6-bisphosphate (FBP). Catalyzes the conversion of lactate to pyruvate. The chain is L-lactate dehydrogenase from Streptococcus suis (strain 98HAH33).